A 454-amino-acid polypeptide reads, in one-letter code: Growth/differentiation factor 6 (454 aa).

The N-terminal stretch at 1–22 (MDTPRVLLWAIFLISFLWDLPG) is a signal peptide. A propeptide spanning residues 23–334 (FQQASISSSS…LPSPGRRRRR (312 aa)) is cleaved from the precursor. Residues 28–93 (ISSSSSSSTE…QGQEPPGRGL (66 aa)) form a disordered region. Composition is skewed to basic and acidic residues over residues 39–52 (DSTK…EGKM) and 60–73 (AEGR…LRQK). The span at 81 to 92 (GQHQGQEPPGRG) shows a compositional bias: low complexity. The N-linked (GlcNAc...) asparagine glycan is linked to N117. Disordered regions lie at residues 247-268 (DTGA…SLGF) and 303-350 (AEAA…KKSR). The span at 303–319 (AEAAGAEGSWPAPSGSP) shows a compositional bias: low complexity. A compositionally biased stretch (basic residues) spans 329–350 (GRRRRRTAFASRHGKRHGKKSR). Cystine bridges form between C353–C419, C382–C451, and C386–C453.

It belongs to the TGF-beta family. In terms of assembly, homodimer; disulfide-linked. In terms of tissue distribution, expressed in different subsets of developing joints. Highly expressed in the cochlea.

It is found in the secreted. In terms of biological role, growth factor that controls proliferation and cellular differentiation in the retina and bone formation. Plays a key role in regulating apoptosis during retinal development. Establishes dorsal-ventral positional information in the retina and controls the formation of the retinotectal map. Required for normal formation of bones and joints in the limbs, skull, digits and axial skeleton. Plays a key role in establishing boundaries between skeletal elements during development. Regulation of GDF6 expression seems to be a mechanism for evolving species-specific changes in skeletal structures. Seems to positively regulate differentiation of chondrogenic tissue through the growth factor receptors subunits BMPR1A, BMPR1B, BMPR2 and ACVR2A, leading to the activation of SMAD1-SMAD5-SMAD8 complex. The regulation of chondrogenic differentiation is inhibited by NOG. Also involved in the induction of adipogenesis from mesenchymal stem cells. This mechanism acts through the growth factor receptors subunits BMPR1A, BMPR2 and ACVR2A and the activation of SMAD1-SMAD5-SMAD8 complex and MAPK14/p38. The polypeptide is Growth/differentiation factor 6 (Gdf6) (Mus musculus (Mouse)).